The chain runs to 261 residues: Hydrolase in agr operon (261 aa).

The 239-residue stretch at 1-239 (MKVQIYQLPI…ADILTVDLNL (239 aa)) folds into the CN hydrolase domain. E41 functions as the Proton acceptor in the catalytic mechanism. The Proton donor role is filled by K110. The Nucleophile role is filled by C146.

It belongs to the carbon-nitrogen hydrolase superfamily. NIT1/NIT2 family.

The chain is Hydrolase in agr operon from Staphylococcus aureus.